The chain runs to 168 residues: Thioredoxin Y, chloroplastic (168 aa).

Residues 1-58 (MAAFTSTTTAAAASPTPCRPAALVARSSAAPLRSAAPVVVAAGLRRAAAPSRRGATLR) constitute a chloroplast transit peptide. The Thioredoxin domain maps to 59–165 (VQAKKQTFSS…LIQQIESALE (107 aa)). Catalysis depends on nucleophile residues C89 and C92. A disulfide bond links C89 and C92.

It belongs to the thioredoxin family. Plant Y-type subfamily.

It is found in the plastid. Its subcellular location is the chloroplast. Functionally, probable thiol-disulfide oxidoreductase that may participate in various redox reactions. This Oryza sativa subsp. japonica (Rice) protein is Thioredoxin Y, chloroplastic.